Here is a 235-residue protein sequence, read N- to C-terminus: uncharacterized protein (235 aa).

Residues 2 to 69 (CRLAKIISNA…KPRLWIYYKP (68 aa)) form the S4 RNA-binding domain. Aspartate 102 (nucleophile) is an active-site residue.

The protein belongs to the pseudouridine synthase RsuA family.

The catalysed reaction is a uridine in RNA = a pseudouridine in RNA. This is an uncharacterized protein from Rickettsia prowazekii (strain Madrid E).